The chain runs to 257 residues: Glucose-1-phosphate cytidylyltransferase (257 aa).

Residues Leu6–Leu10, Gly11–Arg13, Lys23, Ser104, Arg109, and Gly128 contribute to the substrate site. Positions 129 and 234 each coordinate Mg(2+).

This sequence belongs to the glucose-1-phosphate cytidylyltransferase family. As to quaternary structure, homohexamer. Mg(2+) is required as a cofactor.

The enzyme catalyses alpha-D-glucose 1-phosphate + CTP + H(+) = CDP-D-glucose + diphosphate. It participates in nucleotide-sugar biosynthesis; CDP-3,6-dideoxy-D-mannose biosynthesis; CDP-3,6-dideoxy-D-mannose from CTP and alpha-D-glucose 1-phosphate: step 1/5. The protein operates within bacterial outer membrane biogenesis; LPS O-antigen biosynthesis. In terms of biological role, involved in the biosynthesis of the tyvelose, a 3,6-dideoxyhexose found in the O-antigen of the surface lipopolysaccharides. It catalyzes the transfer of a CMP moiety from CTP to glucose 1-phosphate. This is Glucose-1-phosphate cytidylyltransferase (rfbF) from Salmonella typhimurium (strain LT2 / SGSC1412 / ATCC 700720).